Here is a 211-residue protein sequence, read N- to C-terminus: Troponin I, cardiac muscle (211 aa).

The interval 1 to 24 is disordered; the sequence is MADESSDAAGEPQPAPAPVRRRSS. An N-acetylalanine modification is found at alanine 2. Serine 5 and serine 6 each carry phosphoserine. A phosphoserine; by PKA and PKD/PRKD1 mark is found at serine 23 and serine 24. Tyrosine 27 is subject to Phosphotyrosine. A Phosphothreonine; by STK4/MST1 modification is found at threonine 32. An involved in binding TNC region spans residues 33 to 80; that stretch reads EPHAKKKSKISASRKLQLKTLMLQIAKQEMEREAEERRGEKGRVLRTR. Phosphoserine; by PKC/PRKCE is present on residues serine 43 and serine 45. Threonine 52 carries the post-translational modification Phosphothreonine; by STK4/MST1. Threonine 79 bears the Phosphothreonine mark. Threonine 130 and threonine 144 each carry phosphothreonine; by STK4/MST1. The tract at residues 130–151 is involved in binding TNC and actin; that stretch reads TQKIYDLRGKFKRPTLRRVRIS. 3 positions are modified to phosphoserine: serine 151, serine 167, and serine 200.

It belongs to the troponin I family. Interacts with TRIM63. Binds to actin and tropomyosin. Interacts with STK4/MST1. In terms of processing, phosphorylated at Ser-23 and Ser-24 by PRKD1; phosphorylation reduces myofilament calcium sensitivity. Phosphorylated preferentially at Thr-32. Phosphorylation by STK4/MST1 alters its binding affinity to TNNC1 (cardiac Tn-C) and TNNT2 (cardiac Tn-T). Phosphorylated at Ser-43 and Ser-45 by PRKCE; phosphorylation increases myocardium contractile dysfunction.

Its function is as follows. Troponin I is the inhibitory subunit of troponin, the thin filament regulatory complex which confers calcium-sensitivity to striated muscle actomyosin ATPase activity. The protein is Troponin I, cardiac muscle (Tnni3) of Mus musculus (Mouse).